The following is a 296-amino-acid chain: Protein FAM221A (296 aa).

The disordered stretch occupies residues 235-263; that stretch reads MQPPSTSSPQPLAVGPSTQISSLRKPEED. Over residues 237–256 the composition is skewed to polar residues; it reads PPSTSSPQPLAVGPSTQISS.

This sequence belongs to the FAM221 family.

The chain is Protein FAM221A (Fam221a) from Rattus norvegicus (Rat).